We begin with the raw amino-acid sequence, 944 residues long: Protein translocase subunit SecA (944 aa).

Residues Gln90, 108–112 (GEGKT), and Asp509 contribute to the ATP site. Positions 533 to 565 (VKPEEGHKPPVSPQRKTKSAGFKEEKNKNLSIS) are disordered.

It belongs to the SecA family. Monomer and homodimer. Part of the essential Sec protein translocation apparatus which comprises SecA, SecYEG and auxiliary proteins SecDF. Other proteins may also be involved.

Its subcellular location is the cell inner membrane. It is found in the cellular thylakoid membrane. The protein resides in the cytoplasm. The catalysed reaction is ATP + H2O + cellular proteinSide 1 = ADP + phosphate + cellular proteinSide 2.. In terms of biological role, part of the Sec protein translocase complex. Interacts with the SecYEG preprotein conducting channel. Has a central role in coupling the hydrolysis of ATP to the transfer of proteins into and across the cell membrane, serving as an ATP-driven molecular motor driving the stepwise translocation of polypeptide chains across the membrane. Functionally, probably participates in protein translocation into and across both the cytoplasmic and thylakoid membranes in cyanobacterial cells. The protein is Protein translocase subunit SecA of Prochlorococcus marinus (strain NATL1A).